The chain runs to 182 residues: Transcription antitermination protein NusB (182 aa).

Positions 159–182 are disordered; sequence TPVENSEAEAAGYPVEESIEEDSQ.

This sequence belongs to the NusB family.

In terms of biological role, involved in transcription antitermination. Required for transcription of ribosomal RNA (rRNA) genes. Binds specifically to the boxA antiterminator sequence of the ribosomal RNA (rrn) operons. This chain is Transcription antitermination protein NusB, found in Corynebacterium diphtheriae (strain ATCC 700971 / NCTC 13129 / Biotype gravis).